Here is a 546-residue protein sequence, read N- to C-terminus: Membrane protein insertase YidC (546 aa).

A helical membrane pass occupies residues 6–26; it reads LILFIVFSFSLLLLWEAWQDK. The segment at 31–56 is disordered; sequence PATRPVAGAPAGSAAPTPSTALNAPA. Residues 37–56 show a composition bias toward low complexity; that stretch reads AGAPAGSAAPTPSTALNAPA. 4 consecutive transmembrane segments (helical) span residues 351 to 371, 425 to 445, 465 to 482, and 494 to 514; these read LVGN…LALY, LPIL…LAAV, WYIL…QVKL, and IMMI…AGLV.

It belongs to the OXA1/ALB3/YidC family. Type 1 subfamily. In terms of assembly, interacts with the Sec translocase complex via SecD. Specifically interacts with transmembrane segments of nascent integral membrane proteins during membrane integration.

The protein resides in the cell inner membrane. Functionally, required for the insertion and/or proper folding and/or complex formation of integral membrane proteins into the membrane. Involved in integration of membrane proteins that insert both dependently and independently of the Sec translocase complex, as well as at least some lipoproteins. Aids folding of multispanning membrane proteins. The polypeptide is Membrane protein insertase YidC (Thiobacillus denitrificans (strain ATCC 25259 / T1)).